Consider the following 557-residue polypeptide: Arginine--tRNA ligase (557 aa).

The 'HIGH' region motif lies at 132–142 (ANPTGLLHMGN).

It belongs to the class-I aminoacyl-tRNA synthetase family. In terms of assembly, monomer.

It is found in the cytoplasm. It carries out the reaction tRNA(Arg) + L-arginine + ATP = L-arginyl-tRNA(Arg) + AMP + diphosphate. The protein is Arginine--tRNA ligase of Carboxydothermus hydrogenoformans (strain ATCC BAA-161 / DSM 6008 / Z-2901).